The sequence spans 248 residues: uncharacterized protein (248 aa).

Residues 33–57 adopt a coiled-coil conformation; that stretch reads EWQLSEGQKRCEEINRQNRQLRVEK.

This is an uncharacterized protein from Escherichia coli (strain K12).